A 325-amino-acid chain; its full sequence is Eukaryotic translation initiation factor 3 subunit I (325 aa).

WD repeat units lie at residues 8–47, 50–91, 144–183, and 186–225; these read GHER…RLGT, GHTG…ALLK, CNDS…VLVN, and EHSR…HQKT. The residue at position 219 (threonine 219) is a Phosphothreonine. Lysine 264 bears the N6-acetyllysine mark. Lysine 282 participates in a covalent cross-link: Glycyl lysine isopeptide (Lys-Gly) (interchain with G-Cter in ubiquitin). The stretch at 283 to 324 is one WD 5 repeat; the sequence is GHFGPINSVAFHPDGKSYSSGGEDGYVRIHYFDPQYFEFEFE. Tyrosine 308 is modified (phosphotyrosine).

Belongs to the eIF-3 subunit I family. In terms of assembly, component of the eukaryotic translation initiation factor 3 (eIF-3) complex, which is composed of 13 subunits: EIF3A, EIF3B, EIF3C, EIF3D, EIF3E, EIF3F, EIF3G, EIF3H, EIF3I, EIF3J, EIF3K, EIF3L and EIF3M. The eIF-3 complex appears to include 3 stable modules: module A is composed of EIF3A, EIF3B, EIF3G and EIF3I; module B is composed of EIF3F, EIF3H, and EIF3M; and module C is composed of EIF3C, EIF3D, EIF3E, EIF3K and EIF3L. EIF3C of module C binds EIF3B of module A and EIF3H of module B, thereby linking the three modules. EIF3J is a labile subunit that binds to the eIF-3 complex via EIF3B. The eIF-3 complex interacts with RPS6KB1 under conditions of nutrient depletion. Mitogenic stimulation leads to binding and activation of a complex composed of MTOR and RPTOR, leading to phosphorylation and release of RPS6KB1 and binding of EIF4B to eIF-3. In terms of processing, phosphorylated by TGF-beta type II receptor.

It is found in the cytoplasm. Component of the eukaryotic translation initiation factor 3 (eIF-3) complex, which is required for several steps in the initiation of protein synthesis. The eIF-3 complex associates with the 40S ribosome and facilitates the recruitment of eIF-1, eIF-1A, eIF-2:GTP:methionyl-tRNAi and eIF-5 to form the 43S pre-initiation complex (43S PIC). The eIF-3 complex stimulates mRNA recruitment to the 43S PIC and scanning of the mRNA for AUG recognition. The eIF-3 complex is also required for disassembly and recycling of post-termination ribosomal complexes and subsequently prevents premature joining of the 40S and 60S ribosomal subunits prior to initiation. The eIF-3 complex specifically targets and initiates translation of a subset of mRNAs involved in cell proliferation, including cell cycling, differentiation and apoptosis, and uses different modes of RNA stem-loop binding to exert either translational activation or repression. The chain is Eukaryotic translation initiation factor 3 subunit I from Bos taurus (Bovine).